The primary structure comprises 67 residues: Large ribosomal subunit protein bL35 (67 aa).

It belongs to the bacterial ribosomal protein bL35 family.

This is Large ribosomal subunit protein bL35 from Picosynechococcus sp. (strain ATCC 27264 / PCC 7002 / PR-6) (Agmenellum quadruplicatum).